The sequence spans 350 residues: CMP-N-acetylneuraminate-beta-galactosamide-alpha-2,3-sialyltransferase 2 (350 aa).

The Cytoplasmic portion of the chain corresponds to M1–R6. A helical; Signal-anchor for type II membrane protein membrane pass occupies residues V7 to S27. Over H28 to N350 the chain is Lumenal. Intrachain disulfides connect C70–C75, C72–C149, and C152–C291. Positions 116, 157, and 180 each coordinate substrate. A glycan (N-linked (GlcNAc...) asparagine) is linked at N211. Substrate contacts are provided by Y240, Y276, G280, G300, H309, and H326.

Belongs to the glycosyltransferase 29 family. As to quaternary structure, homodimer; disulfide-linked. Homodimer formation occurs in the endoplasmic reticulum. In terms of processing, the soluble form derives from the membrane form by proteolytic processing. Post-translationally, N-glycosylated; necessary for proper exit from endoplasmic reticulum and trafficking to the Golgi apparatus. In terms of tissue distribution, strongly expressed in brain and liver and to a lesser extent in heart and kidney. Scarcely detectable in lung, pancreas, spleen and submaxillary gland. Expressed in L5 dorsal root ganglion (DRG) neurons (at protein level).

The protein localises to the golgi apparatus. It is found in the golgi stack membrane. Its subcellular location is the secreted. It carries out the reaction a beta-D-galactosyl-(1-&gt;3)-N-acetyl-alpha-D-galactosaminyl derivative + CMP-N-acetyl-beta-neuraminate = an N-acetyl-alpha-neuraminyl-(2-&gt;3)-beta-D-galactosyl-(1-&gt;3)-N-acetyl-alpha-D-galactosaminyl derivative + CMP + H(+). The enzyme catalyses a ganglioside GM1 (d18:1(4E)) + CMP-N-acetyl-beta-neuraminate = a ganglioside GD1a (d18:1(4E)) + CMP + H(+). The catalysed reaction is ganglioside GM1 (d18:1(4E)/18:0) + CMP-N-acetyl-beta-neuraminate = ganglioside GD1a (18:1(4E)/18:0) + CMP + H(+). It catalyses the reaction a ganglioside GA1 + CMP-N-acetyl-beta-neuraminate = a ganglioside GM1b + CMP + H(+). It carries out the reaction a ganglioside GA1 (d18:1(4E)) + CMP-N-acetyl-beta-neuraminate = a ganglioside GM1b (d18:1(4E)) + CMP + H(+). The enzyme catalyses a ganglioside GD1b + CMP-N-acetyl-beta-neuraminate = a ganglioside GT1b + CMP + H(+). The catalysed reaction is a ganglioside GD1b (d18:1(4E)) + CMP-N-acetyl-beta-neuraminate = a ganglioside GT1b (d18:1(4E)) + CMP + H(+). It catalyses the reaction a globoside GalGb4Cer + CMP-N-acetyl-beta-neuraminate = a globoside MSGG + CMP + H(+). The protein operates within protein modification; protein glycosylation. It functions in the pathway glycolipid biosynthesis. Functionally, a beta-galactoside alpha2-3 sialyltransferase primarily involved in terminal sialylation of ganglio and globo series glycolipids. Catalyzes the transfer of sialic acid (N-acetyl-neuraminic acid; Neu5Ac) from the nucleotide sugar donor CMP-Neu5Ac onto acceptor Galbeta-(1-&gt;3)-GalNAc-terminated glycoconjugates through an alpha2-3 linkage. Sialylates GM1/GM1a, GA1/asialo-GM1 and GD1b gangliosides to form GD1a, GM1b and GT1b, respectively. Together with ST3GAL3, primarily responsible for biosynthesis of brain GD1a and GT1b that function as ligands for myelin-associated glycoprotein MAG on axons, regulating MAG expression and axonal myelin stability and regeneration. Via GT1b regulates TLR2 signaling in spinal cord microglia in response to nerve injury. Responsible for the sialylation of the pluripotent stem cell- and cancer stem cell-associated antigen SSEA3, forming SSEA4. Sialylates with low efficiency asialofetuin, presumably onto O-glycosidically linked Galbeta-(1-&gt;3)-GalNAc-O-Ser. The chain is CMP-N-acetylneuraminate-beta-galactosamide-alpha-2,3-sialyltransferase 2 from Mus musculus (Mouse).